The sequence spans 468 residues: Nuclear pore complex protein Nup50 (468 aa).

A compositionally biased stretch (basic and acidic residues) spans 1 to 16 (MAKRNAEKELTDRNWD). The tract at residues 1-26 (MAKRNAEKELTDRNWDQEDEAEEVGT) is disordered. N-acetylalanine is present on Ala2. Lys8 carries the post-translational modification N6-acetyllysine. Ser52 is modified (phosphoserine). Residues 76 to 77 (FG) form repeat 1. A 5 X 2 AA repeats of F-G region spans residues 76 to 304 (FGSGAGGKPL…FSPGNSSLFG (229 aa)). Lys83 carries the N6-acetyllysine modification. Copy 2 of the repeat occupies 113-114 (FG). 2 disordered regions span residues 122 to 148 (TTLV…LASS) and 201 to 224 (HGNS…SPSL). N6-acetyllysine is present on Lys127. The span at 137–148 (SQQPSSSGLASS) shows a compositional bias: low complexity. Residues 144 to 206 (GLASSKACVG…IEQQHGNSGR (63 aa)) form a binding to CDKN1B region. Ser208 and Ser221 each carry phosphoserine. Repeat unit 3 spans residues 225–226 (FG). Residue Ser234 is modified to Phosphoserine. The interval 238–269 (FHGNKTEDTPDKKMEVASEKKTDPSSLGATSA) is disordered. A compositionally biased stretch (basic and acidic residues) spans 241-260 (NKTEDTPDKKMEVASEKKTD). Thr246 and Thr259 each carry phosphothreonine. A Phosphoserine modification is found at Ser270. Residues 273-274 (FG) form repeat 4. Ser296 bears the Phosphoserine mark. Repeat unit 5 spans residues 303–304 (FG). Residues 304 to 317 (GKDTTQSKPVSSPF) show a composition bias toward polar residues. Residues 304 to 345 (GKDTTQSKPVSSPFPTKPLEGQAEGDSGECKGGDEEENDEPP) are disordered. Residues 335 to 468 (GGDEEENDEP…HKILLEKKDA (134 aa)) enclose the RanBD1 domain. A Glycyl lysine isopeptide (Lys-Gly) (interchain with G-Cter in SUMO2) cross-link involves residue Lys353. Lys450 bears the N6-acetyllysine mark.

Interacts with Importin alpha-2, Importin beta, Importin beta-2, NUP153, Ran binding protein 7, CDKN1B and itself. Does not interact with TPR. As to expression, ubiquitous. Highest levels in testis, peripheral blood leukocytes and fetal liver.

The protein localises to the nucleus. It is found in the nuclear pore complex. It localises to the nucleus membrane. In terms of biological role, component of the nuclear pore complex that has a direct role in nuclear protein import. Actively displaces NLSs from importin-alpha, and facilitates disassembly of the importin-alpha:beta-cargo complex and importin recycling. Interacts with regulatory proteins of cell cycle progression including CDKN1B. This interaction is required for correct intracellular transport and degradation of CDKN1B. This chain is Nuclear pore complex protein Nup50 (NUP50), found in Homo sapiens (Human).